A 112-amino-acid chain; its full sequence is SRA stem-loop-interacting RNA-binding protein, mitochondrial (112 aa).

A Phosphoserine modification is found at serine 15. An RRM domain is found at 19 to 98; that stretch reads PIAFVRKIPW…IHVQAQRAKA (80 aa). Threonine 104 carries the post-translational modification Phosphothreonine. Serine 105 is subject to Phosphoserine.

The protein resides in the mitochondrion. The protein localises to the nucleus. Functionally, RNA-binding protein that acts as a nuclear receptor corepressor. Probably acts by binding the SRA RNA, and repressing the SRA-mediated nuclear receptor coactivation. Binds the STR7 loop of SRA RNA. Also able to repress glucocorticoid (GR), androgen (AR), thyroid (TR) and VDR-mediated transactivation. This chain is SRA stem-loop-interacting RNA-binding protein, mitochondrial (Slirp), found in Mus musculus (Mouse).